The chain runs to 38 residues: Large ribosomal subunit protein bL36 (38 aa).

The protein belongs to the bacterial ribosomal protein bL36 family.

This Porphyromonas gingivalis (strain ATCC 33277 / DSM 20709 / CIP 103683 / JCM 12257 / NCTC 11834 / 2561) protein is Large ribosomal subunit protein bL36.